The sequence spans 940 residues: Isoleucine--tRNA ligase (940 aa).

The 'HIGH' region motif lies at 58–68 (PYANGSIHIGH). An L-isoleucyl-5'-AMP-binding site is contributed by Glu-564. The 'KMSKS' region signature appears at 605–609 (KMSKS). Residue Lys-608 participates in ATP binding. Zn(2+) is bound by residues Cys-903, Cys-906, Cys-923, and Cys-926.

The protein belongs to the class-I aminoacyl-tRNA synthetase family. IleS type 1 subfamily. As to quaternary structure, monomer. Zn(2+) is required as a cofactor.

It is found in the cytoplasm. It catalyses the reaction tRNA(Ile) + L-isoleucine + ATP = L-isoleucyl-tRNA(Ile) + AMP + diphosphate. In terms of biological role, catalyzes the attachment of isoleucine to tRNA(Ile). As IleRS can inadvertently accommodate and process structurally similar amino acids such as valine, to avoid such errors it has two additional distinct tRNA(Ile)-dependent editing activities. One activity is designated as 'pretransfer' editing and involves the hydrolysis of activated Val-AMP. The other activity is designated 'posttransfer' editing and involves deacylation of mischarged Val-tRNA(Ile). This chain is Isoleucine--tRNA ligase, found in Shewanella sp. (strain W3-18-1).